A 394-amino-acid chain; its full sequence is Phosphoglycerate kinase (394 aa).

Substrate-binding positions include 21–23 (DLN), Arg-36, 59–62 (HLGR), Arg-113, and Arg-146. ATP is bound by residues Lys-197, Glu-319, and 345–348 (GGDT).

The protein belongs to the phosphoglycerate kinase family. Monomer.

It localises to the cytoplasm. It carries out the reaction (2R)-3-phosphoglycerate + ATP = (2R)-3-phospho-glyceroyl phosphate + ADP. It functions in the pathway carbohydrate degradation; glycolysis; pyruvate from D-glyceraldehyde 3-phosphate: step 2/5. The chain is Phosphoglycerate kinase from Halorhodospira halophila (strain DSM 244 / SL1) (Ectothiorhodospira halophila (strain DSM 244 / SL1)).